The primary structure comprises 297 residues: 4-hydroxy-tetrahydrodipicolinate synthase (297 aa).

T47 contributes to the pyruvate binding site. Y136 functions as the Proton donor/acceptor in the catalytic mechanism. K165 functions as the Schiff-base intermediate with substrate in the catalytic mechanism. I206 provides a ligand contact to pyruvate.

It belongs to the DapA family. In terms of assembly, homotetramer; dimer of dimers.

The protein resides in the cytoplasm. It catalyses the reaction L-aspartate 4-semialdehyde + pyruvate = (2S,4S)-4-hydroxy-2,3,4,5-tetrahydrodipicolinate + H2O + H(+). It functions in the pathway amino-acid biosynthesis; L-lysine biosynthesis via DAP pathway; (S)-tetrahydrodipicolinate from L-aspartate: step 3/4. Catalyzes the condensation of (S)-aspartate-beta-semialdehyde [(S)-ASA] and pyruvate to 4-hydroxy-tetrahydrodipicolinate (HTPA). The protein is 4-hydroxy-tetrahydrodipicolinate synthase of Campylobacter curvus (strain 525.92).